Reading from the N-terminus, the 292-residue chain is Homoserine kinase (292 aa).

ATP is bound at residue 81-91; that stretch reads RPRSGLGSSGA.

It belongs to the GHMP kinase family. Homoserine kinase subfamily.

It localises to the cytoplasm. It carries out the reaction L-homoserine + ATP = O-phospho-L-homoserine + ADP + H(+). It participates in amino-acid biosynthesis; L-threonine biosynthesis; L-threonine from L-aspartate: step 4/5. In terms of biological role, catalyzes the ATP-dependent phosphorylation of L-homoserine to L-homoserine phosphate. The chain is Homoserine kinase from Thermococcus gammatolerans (strain DSM 15229 / JCM 11827 / EJ3).